Consider the following 584-residue polypeptide: Putative sel1-like repeat-containing protein L18 (584 aa).

Sel1-like repeat units lie at residues 132 to 167, 168 to 203, 204 to 237, 238 to 273, 274 to 309, and 316 to 351; these read SMAQYNLGQMYYRGISTKKNIQKAIKWITKSADQNN, KYGLINLARFYEYGDGVLLDIDKATQLLEQASCQNF, SKAQFYLGRIYMYKDPPDYKLAFKYYQQAANQNH, SSAQYFIAVFYKTGKCVAQDYKKAVHWLTLAASQGL, NSAKIKLAEMYMKGIDVEQNYHKAFELLNSSIYDDG, and EVAMTELACMYKRGLGIEKNISKAIYLHIKSRNTKN.

The protein is Putative sel1-like repeat-containing protein L18 of Acanthamoeba polyphaga (Amoeba).